Here is a 1407-residue protein sequence, read N- to C-terminus: MKDLLKFLKAQTKTEEFDAIKIALASPDMIRSWSFGEVKKPETINYRTFKPERDGLFCARIFGPVKDYECLCGKYKRLKHRGVICEKCGVEVTQTKVRRERMGHIELASPTAHIWFLKSLPSRIGLLLDMPLRDIERVLYFESYVVIEGGMTNLERQQILTEEQYLDALEEFGDEFDAKMGAEAIQALLKSMDLEQECEQLREELNETNSETKRKKLTKRIKLLEAFVQSGNKPEWMILTVLPVLPPDLRPLVPLDGGRFATSDLNDLYRRVINRNNRLKRLLDLAAPDIIVRNEKRMLQEAVDALLDNGRRGRAITGSNKRPLKSLADMIKGKQGRFRQNLLGKRVDYSGRSVITVGPYLRLHQCGLPKKMALELFKPFIYGKLELRGLATTIKAAKKMVEREEAVVWDILDEVIREHPVLLNRAPTLHRLGIQAFEPVLIEGKAIQLHPLVCAAYNADFDGDQMAVHVPLTLEAQLEARALMMSTNNILSPANGEPIIVPSQDVVLGLYYMTRDCVNAKGEGMVLTGPKEAERLYRSGLASLHARVKVRITEYEKDANGELVAKTSLKDTTVGRAILWMIVPKGLPYSIVNQALGKKAISKMLNTCYRILGLKPTVIFADQIMYTGFAYAARSGASVGIDDMVIPEKKHEIISEAEAEVAEIQEQFQSGLVTAGERYNKVIDIWAAANDRVSKAMMDNLQTETVINRDGQEEKQVSFNSIYMMADSGARGSAAQIRQLAGMRGLMAKPDGSIIETPITANFREGLNVLQYFISTHGARKGLADTALKTANSGYLTRRLVDVAQDLVVTEDDCGTHEGIMMTPVIEGGDVKEPLRDRVLGRVTAEDVLKPGTADILVPRNTLLHEQWCDLLEENSVDAVKVRSVVSCDTDFGVCAHCYGRDLARGHIINKGEAIGVIAAQSIGEPGTQLTMRTFHIGGAASRAAAESSIQVKNKGSIKLSNVKSVVNSSGKLVITSRNTELKLIDEFGRTKESYKVPYGAVLAKGDGEQVAGGETVANWDPHTMPVITEVSGFVRFTDMIDGQTITRQTDELTGLSSLVVLDSAERTAGGKDLRPALKIVDAQGNDVLIPGTDMPAQYFLPGKAIVQLEDGVQISSGDTLARIPQESGGTKDITGGLPRVADLFEARRPKEPAILAEISGIVSFGKETKGKRRLVITPVDGSDPYEEMIPKWRQLNVFEGERVERGDVISDGPEAPHDILRLRGVHAVTRYIVNEVQDVYRLQGVKINDKHIEVIVRQMLRKATIVNAGSSDFLEGEQVEYSRVKIANRELEANGKVGATYSRDLLGITKASLATESFISAASFQETTRVLTEAAVAGKRDELRGLKENVIVGRLIPAGTGYAYHQDRMRRRAAGEAPAAPQVTAEDASASLAELLNAGLGGSDNE.

Zn(2+)-binding residues include C70, C72, C85, and C88. D460, D462, and D464 together coordinate Mg(2+). Positions 814, 888, 895, and 898 each coordinate Zn(2+). Position 972 is an N6-acetyllysine (K972).

It belongs to the RNA polymerase beta' chain family. In terms of assembly, the RNAP catalytic core consists of 2 alpha, 1 beta, 1 beta' and 1 omega subunit. When a sigma factor is associated with the core the holoenzyme is formed, which can initiate transcription. The cofactor is Mg(2+). Zn(2+) serves as cofactor.

It carries out the reaction RNA(n) + a ribonucleoside 5'-triphosphate = RNA(n+1) + diphosphate. Its function is as follows. DNA-dependent RNA polymerase catalyzes the transcription of DNA into RNA using the four ribonucleoside triphosphates as substrates. This is DNA-directed RNA polymerase subunit beta' from Shigella sonnei (strain Ss046).